Consider the following 692-residue polypeptide: Polyribonucleotide nucleotidyltransferase (692 aa).

Mg(2+) is bound by residues Asp484 and Asp490. The KH domain maps to 551–610 (PRIITIQINPDRIRDVIGPGGKVIRALTEETGATIDIQDNGTVTIASVDGEAGAAAKRRI). In terms of domain architecture, S1 motif spans 620–688 (DTIYDGKVAK…RQGKIKLSMK (69 aa)).

This sequence belongs to the polyribonucleotide nucleotidyltransferase family. In terms of assembly, component of the RNA degradosome, which is a multiprotein complex involved in RNA processing and mRNA degradation. Mg(2+) is required as a cofactor.

The protein localises to the cytoplasm. The catalysed reaction is RNA(n+1) + phosphate = RNA(n) + a ribonucleoside 5'-diphosphate. Involved in mRNA degradation. Catalyzes the phosphorolysis of single-stranded polyribonucleotides processively in the 3'- to 5'-direction. The sequence is that of Polyribonucleotide nucleotidyltransferase from Acidithiobacillus ferrooxidans (strain ATCC 53993 / BNL-5-31) (Leptospirillum ferrooxidans (ATCC 53993)).